The following is a 249-amino-acid chain: Putative protein SNX29P2 (249 aa).

Disordered regions lie at residues 109–171 (QVTN…SNSW) and 188–249 (DVKS…PGFK). A compositionally biased stretch (low complexity) spans 156 to 170 (SPFGPNSNGSQSSNS). Acidic residues predominate over residues 193–204 (DDEDVDENEDDV). Positions 226–242 (HSVTQAGVQWHDLSSLQ) are enriched in polar residues.

This sequence belongs to the sorting nexin family.

The polypeptide is Putative protein SNX29P2 (SNX29P2) (Homo sapiens (Human)).